The chain runs to 619 residues: Vitamin B12 transporter BtuB (619 aa).

The N-terminal stretch at 1–25 (MINKKRLLLSTVSIMVISGWNQASA) is a signal peptide. The short motif at 31–38 (DSLVVTAS) is the TonB box element. The region spanning 43 to 157 (PISSILAPYT…IGGVINIITT (115 aa)) is the TBDR plug domain. Residues L88, S90, and 115 to 116 (IS) contribute to the cyanocob(III)alamin site. The TBDR beta-barrel domain maps to 160–619 (KLGTSLNVGI…EYYLTGSYNF (460 aa)). 3 beta stranded membrane-spanning segments follow: residues 163-170 (TSLNVGIG), 174-183 (YQTYDGATQQ), and 189-200 (TVLTAAANYTYT). Residues D204, Q216, D218, and D220 each coordinate Ca(2+). Beta stranded transmembrane passes span 222–232 (FMSKMLWLGVD) and 237–253 (EQVSGFVRAYGYNNRTS). Y254 and D255 together coordinate Ca(2+). A256 lines the cyanocob(III)alamin pocket. D268 provides a ligand contact to Ca(2+). Transmembrane regions (beta stranded) follow at residues 270–284 (RELYSRHYDMGVRFN), 286–303 (GIYSSQLITSYSHTKDYN), 316–332 (SLNDSEQYNLQWGNTFQ), 335–344 (QGIVSTGVDF), 360–376 (KTVRNTGMYLTAQQQLK), 378–388 (FILEGAIRSDK), 392–407 (AGWNTTWQASLGWEFI), 410–424 (YRLIASYGTAFKAPT), 441–450 (ESKQWEGGIE), 456–465 (LTWRMTVYRN), 478–495 (YYNIGKAKIKGVEWTGLI), 499–514 (MFQHQLTIQYIDPRNS), 522–534 (RRAKQQVKYQLDW), 540–556 (DWGLTYQYLGRRYDKDF), 563–577 (RVKLGGVSFWDLTVS), 590–601 (IANLLDKDYETV), and 607–619 (PGREYYLTGSYNF). Residue S316 participates in cyanocob(III)alamin binding. R522 contacts cyanocob(III)alamin. The TonB C-terminal box signature appears at 602–619 (YGYRIPGREYYLTGSYNF).

This sequence belongs to the TonB-dependent receptor family. BtuB (TC 1.B.14.3.1) subfamily.

Its subcellular location is the cell outer membrane. Involved in the active translocation of vitamin B12 (cyanocobalamin) across the outer membrane to the periplasmic space. It derives its energy for transport by interacting with the trans-periplasmic membrane protein TonB. The sequence is that of Vitamin B12 transporter BtuB from Photorhabdus laumondii subsp. laumondii (strain DSM 15139 / CIP 105565 / TT01) (Photorhabdus luminescens subsp. laumondii).